The primary structure comprises 288 residues: Acetylglutamate kinase (288 aa).

Substrate contacts are provided by residues Gly66–Gly67, Arg88, and Asn182.

Belongs to the acetylglutamate kinase family. ArgB subfamily.

The protein resides in the cytoplasm. The catalysed reaction is N-acetyl-L-glutamate + ATP = N-acetyl-L-glutamyl 5-phosphate + ADP. Its pathway is amino-acid biosynthesis; L-arginine biosynthesis; N(2)-acetyl-L-ornithine from L-glutamate: step 2/4. In terms of biological role, catalyzes the ATP-dependent phosphorylation of N-acetyl-L-glutamate. This chain is Acetylglutamate kinase, found in Brachyspira hyodysenteriae (strain ATCC 49526 / WA1).